The following is a 160-amino-acid chain: Serine-protein kinase RsbW (160 aa).

It belongs to the anti-sigma-factor family.

The enzyme catalyses L-seryl-[protein] + ATP = O-phospho-L-seryl-[protein] + ADP + H(+). The catalysed reaction is L-threonyl-[protein] + ATP = O-phospho-L-threonyl-[protein] + ADP + H(+). In terms of biological role, negative regulator of sigma-B activity. Phosphorylates and inactivates its specific antagonist protein, RsbV. Upon phosphorylation of RsbV, RsbW is released and binds to sigma-B, thereby blocking its ability to form an RNA polymerase holoenzyme (E-sigma-B). The polypeptide is Serine-protein kinase RsbW (Bacillus velezensis (strain DSM 23117 / BGSC 10A6 / LMG 26770 / FZB42) (Bacillus amyloliquefaciens subsp. plantarum)).